A 304-amino-acid polypeptide reads, in one-letter code: UDP-N-acetylenolpyruvoylglucosamine reductase (304 aa).

The 166-residue stretch at 33-198 folds into the FAD-binding PCMH-type domain; the sequence is KVGGPVDILL…LEVTFNLEKG (166 aa). Residue R177 is part of the active site. The active-site Proton donor is S227. E297 is a catalytic residue.

This sequence belongs to the MurB family. FAD is required as a cofactor.

It is found in the cytoplasm. The enzyme catalyses UDP-N-acetyl-alpha-D-muramate + NADP(+) = UDP-N-acetyl-3-O-(1-carboxyvinyl)-alpha-D-glucosamine + NADPH + H(+). It participates in cell wall biogenesis; peptidoglycan biosynthesis. Cell wall formation. The polypeptide is UDP-N-acetylenolpyruvoylglucosamine reductase (Clostridium kluyveri (strain NBRC 12016)).